A 525-amino-acid polypeptide reads, in one-letter code: MPKNRGVLDAITRSVIDGSDQESSSSFNSDKEYAAVTKGLSSSRVQKKSSLRQMKSKVKELQSLVNHYRENEAALVSSAKLLSGEIIGYEIKMASLHGKMKSILDENNALKETHKSSAEKRIELVRLPSSKEERNYDEYTLLVNLKKEICAKLQDYKNVQNTVNTKLDEIHTFHEKYYEGLELSLDSKVFDAESSKELAKVRRELNNVRKNSEIKVNNLKMQLLQATKSLEHLKKQAKAKDDYLKCIPELVDKANLTMLSYKKSIANQRETIEALQAELSQQSETKGQIETETQNQVQIPTNVTLVDPFEENNPEDLFAIQEQELQDLRLHKKMADERSRTTHLHLERKNNTIKLLQSYVQSLIQRLPPAQRKHHLGIFQKLGSEKSCPLAPAVASTYAPLLLLSQHSNHQEIDNTPQRLLLAAPDGQSYSEKSTTLNLDYSSRKSYLSRLQPPHIANLKSLTLKTLPRVPTDSPQLPSKDKSQETAKKDDRPKLVANEPVTLDTSTPPVAQSLADSKHCSGLHK.

Residues 467 to 525 (LPRVPTDSPQLPSKDKSQETAKKDDRPKLVANEPVTLDTSTPPVAQSLADSKHCSGLHK) are disordered. Over residues 479–494 (SKDKSQETAKKDDRPK) the composition is skewed to basic and acidic residues.

Its function is as follows. Derepression of silent mating type loci when overexpressed. The protein is Anti-silencing protein 2 (ASF2) of Saccharomyces cerevisiae (strain ATCC 204508 / S288c) (Baker's yeast).